The chain runs to 344 residues: 4-dimethylallyltryptophan N-methyltransferase easF (344 aa).

This sequence belongs to the methyltransferase superfamily. As to quaternary structure, homodimer.

The catalysed reaction is 4-(3-methylbut-2-enyl)-L-tryptophan + S-adenosyl-L-methionine = 4-(3-methylbut-2-enyl)-L-abrine + S-adenosyl-L-homocysteine + H(+). The protein operates within alkaloid biosynthesis; ergot alkaloid biosynthesis. In terms of biological role, 4-dimethylallyltryptophan N-methyltransferase; part of the gene cluster that mediates the biosynthesis of fungal ergot alkaloid. DmaW catalyzes the first step of ergot alkaloid biosynthesis by condensing dimethylallyl diphosphate (DMAP) and tryptophan to form 4-dimethylallyl-L-tryptophan. The second step is catalyzed by the methyltransferase easF that methylates 4-dimethylallyl-L-tryptophan in the presence of S-adenosyl-L-methionine, resulting in the formation of 4-dimethylallyl-L-abrine. The catalase easC and the FAD-dependent oxidoreductase easE then transform 4-dimethylallyl-L-abrine to chanoclavine-I which is further oxidized by easD in the presence of NAD(+), resulting in the formation of chanoclavine-I aldehyde. Agroclavine dehydrogenase easG then mediates the conversion of chanoclavine-I aldehyde to agroclavine via a non-enzymatic adduct reaction: the substrate is an iminium intermediate that is formed spontaneously from chanoclavine-I aldehyde in the presence of glutathione. The presence of easA is not required to complete this reaction. Further conversion of agroclavine to paspalic acid is a two-step process involving oxidation of agroclavine to elymoclavine and of elymoclavine to paspalic acid, the second step being performed by the elymoclavine oxidase cloA. Paspalic acid is then further converted to D-lysergic acid. Ergopeptines are assembled from D-lysergic acid and three different amino acids by the D-lysergyl-peptide-synthetases composed each of a monomudular and a trimodular nonribosomal peptide synthetase subunit. LpsB and lpsC encode the monomodular subunits responsible for D-lysergic acid activation and incorporation into the ergopeptine backbone. LpsA1 and A2 subunits encode the trimodular nonribosomal peptide synthetase assembling the tripeptide portion of ergopeptines. LpsA1 is responsible for formation of the major ergopeptine, ergotamine, and lpsA2 for alpha-ergocryptine, the minor ergopeptine of the total alkaloid mixture elaborated by C.purpurea. D-lysergyl-tripeptides are assembled by the nonribosomal peptide synthetases and released as N-(D-lysergyl-aminoacyl)-lactams. Cyclolization of the D-lysergyl-tripeptides is performed by the Fe(2+)/2-ketoglutarate-dependent dioxygenase easH which introduces a hydroxyl group into N-(D-lysergyl-aminoacyl)-lactam at alpha-C of the aminoacyl residue followed by spontaneous condensation with the terminal lactam carbonyl group. The chain is 4-dimethylallyltryptophan N-methyltransferase easF from Claviceps purpurea (Ergot fungus).